Here is a 71-residue protein sequence, read N- to C-terminus: Large ribosomal subunit protein bL31 (71 aa).

Cysteine 16, cysteine 18, cysteine 36, and cysteine 39 together coordinate Zn(2+).

This sequence belongs to the bacterial ribosomal protein bL31 family. Type A subfamily. In terms of assembly, part of the 50S ribosomal subunit. Zn(2+) serves as cofactor.

Binds the 23S rRNA. The sequence is that of Large ribosomal subunit protein bL31 from Thermotoga sp. (strain RQ2).